We begin with the raw amino-acid sequence, 331 residues long: Holliday junction branch migration complex subunit RuvB (331 aa).

A large ATPase domain (RuvB-L) region spans residues 1–178; that stretch reads MRNSIFEQEE…FGITLRLDFY (178 aa). ATP is bound by residues leucine 17, arginine 18, glycine 59, lysine 62, threonine 63, threonine 64, 125–127, arginine 168, tyrosine 178, and arginine 215; that span reads EDY. Threonine 63 is a binding site for Mg(2+). Positions 179 to 249 are small ATPAse domain (RuvB-S); it reads TVSELLQLLQ…FADLALNKME (71 aa). The head domain (RuvB-H) stretch occupies residues 252–331; sequence QFGLDKLDYT…LSTINSARLP (80 aa). The DNA site is built by arginine 307 and arginine 312.

Belongs to the RuvB family. Homohexamer. Forms an RuvA(8)-RuvB(12)-Holliday junction (HJ) complex. HJ DNA is sandwiched between 2 RuvA tetramers; dsDNA enters through RuvA and exits via RuvB. An RuvB hexamer assembles on each DNA strand where it exits the tetramer. Each RuvB hexamer is contacted by two RuvA subunits (via domain III) on 2 adjacent RuvB subunits; this complex drives branch migration. In the full resolvosome a probable DNA-RuvA(4)-RuvB(12)-RuvC(2) complex forms which resolves the HJ.

The protein resides in the cytoplasm. The enzyme catalyses ATP + H2O = ADP + phosphate + H(+). In terms of biological role, the RuvA-RuvB-RuvC complex processes Holliday junction (HJ) DNA during genetic recombination and DNA repair, while the RuvA-RuvB complex plays an important role in the rescue of blocked DNA replication forks via replication fork reversal (RFR). RuvA specifically binds to HJ cruciform DNA, conferring on it an open structure. The RuvB hexamer acts as an ATP-dependent pump, pulling dsDNA into and through the RuvAB complex. RuvB forms 2 homohexamers on either side of HJ DNA bound by 1 or 2 RuvA tetramers; 4 subunits per hexamer contact DNA at a time. Coordinated motions by a converter formed by DNA-disengaged RuvB subunits stimulates ATP hydrolysis and nucleotide exchange. Immobilization of the converter enables RuvB to convert the ATP-contained energy into a lever motion, pulling 2 nucleotides of DNA out of the RuvA tetramer per ATP hydrolyzed, thus driving DNA branch migration. The RuvB motors rotate together with the DNA substrate, which together with the progressing nucleotide cycle form the mechanistic basis for DNA recombination by continuous HJ branch migration. Branch migration allows RuvC to scan DNA until it finds its consensus sequence, where it cleaves and resolves cruciform DNA. The protein is Holliday junction branch migration complex subunit RuvB of Neorickettsia sennetsu (strain ATCC VR-367 / Miyayama) (Ehrlichia sennetsu).